The following is a 263-amino-acid chain: Post-GPI attachment to proteins factor 2 (263 aa).

6 helical membrane-spanning segments follow: residues 16–36 (FVFC…LLSL), 69–89 (YIWR…AVAF), 109–129 (FLCN…LALT), 143–163 (CFGG…WLFS), 180–200 (YKIL…YLYW), and 208–228 (PGIY…NIFF).

Belongs to the PGAP2 family.

Its subcellular location is the golgi apparatus membrane. It localises to the endoplasmic reticulum membrane. Involved in the lipid remodeling steps of GPI-anchor maturation. Required for stable expression of GPI-anchored proteins at the cell surface. This is Post-GPI attachment to proteins factor 2 from Caenorhabditis briggsae.